The chain runs to 438 residues: Methylenetetrahydrofolate--tRNA-(uracil-5-)-methyltransferase TrmFO (438 aa).

7–12 (GAGLAG) serves as a coordination point for FAD.

The protein belongs to the MnmG family. TrmFO subfamily. Requires FAD as cofactor.

Its subcellular location is the cytoplasm. The enzyme catalyses uridine(54) in tRNA + (6R)-5,10-methylene-5,6,7,8-tetrahydrofolate + NADH + H(+) = 5-methyluridine(54) in tRNA + (6S)-5,6,7,8-tetrahydrofolate + NAD(+). It catalyses the reaction uridine(54) in tRNA + (6R)-5,10-methylene-5,6,7,8-tetrahydrofolate + NADPH + H(+) = 5-methyluridine(54) in tRNA + (6S)-5,6,7,8-tetrahydrofolate + NADP(+). Functionally, catalyzes the folate-dependent formation of 5-methyl-uridine at position 54 (M-5-U54) in all tRNAs. The protein is Methylenetetrahydrofolate--tRNA-(uracil-5-)-methyltransferase TrmFO of Sulfurihydrogenibium sp. (strain YO3AOP1).